A 231-amino-acid polypeptide reads, in one-letter code: tRNA (guanine-N(1)-)-methyltransferase (231 aa).

S-adenosyl-L-methionine-binding positions include Gly109 and 133 to 138; that span reads IGDYVL.

The protein belongs to the RNA methyltransferase TrmD family. Homodimer.

The protein localises to the cytoplasm. The catalysed reaction is guanosine(37) in tRNA + S-adenosyl-L-methionine = N(1)-methylguanosine(37) in tRNA + S-adenosyl-L-homocysteine + H(+). In terms of biological role, specifically methylates guanosine-37 in various tRNAs. This chain is tRNA (guanine-N(1)-)-methyltransferase, found in Nocardia farcinica (strain IFM 10152).